Reading from the N-terminus, the 120-residue chain is NAD(P)H-quinone oxidoreductase subunit 3, chloroplastic (120 aa).

The next 3 membrane-spanning stretches (helical) occupy residues 9 to 29 (IFWA…LISG), 64 to 84 (MFAL…PWAM), and 88 to 108 (VLGV…IVGL).

The protein belongs to the complex I subunit 3 family. As to quaternary structure, NDH is composed of at least 16 different subunits, 5 of which are encoded in the nucleus.

It is found in the plastid. It localises to the chloroplast thylakoid membrane. The catalysed reaction is a plastoquinone + NADH + (n+1) H(+)(in) = a plastoquinol + NAD(+) + n H(+)(out). The enzyme catalyses a plastoquinone + NADPH + (n+1) H(+)(in) = a plastoquinol + NADP(+) + n H(+)(out). Its function is as follows. NDH shuttles electrons from NAD(P)H:plastoquinone, via FMN and iron-sulfur (Fe-S) centers, to quinones in the photosynthetic chain and possibly in a chloroplast respiratory chain. The immediate electron acceptor for the enzyme in this species is believed to be plastoquinone. Couples the redox reaction to proton translocation, and thus conserves the redox energy in a proton gradient. The chain is NAD(P)H-quinone oxidoreductase subunit 3, chloroplastic from Ceratophyllum demersum (Rigid hornwort).